A 436-amino-acid polypeptide reads, in one-letter code: F-box/LRR-repeat protein At2g40920 (436 aa).

Residues 48–98 (EYLLQNFDLDHVMEILMRFPLTSLTRFKCVSKQWSSLISSRYFCNLLYTTV) form the F-box domain. LRR repeat units follow at residues 276–301 (NCVVVSFDIRSEQLTIIPVPREIHLD) and 393–416 (YYNLQSNDLRKVEIKGVPDSWFDK).

The polypeptide is F-box/LRR-repeat protein At2g40920 (Arabidopsis thaliana (Mouse-ear cress)).